A 186-amino-acid polypeptide reads, in one-letter code: Astacin-like metalloprotease toxin 5 (186 aa).

Positions 1–186 (NAVKYDQQLW…CHSKRKAELL (186 aa)) constitute a Peptidase M12A domain. 2 disulfide bridges follow: C42-C177 and C63-C84. A Zn(2+)-binding site is contributed by H92. E93 is an active-site residue. Positions 96 and 102 each coordinate Zn(2+). Residue N122 is glycosylated (N-linked (GlcNAc...) asparagine).

Monomer. Requires Zn(2+) as cofactor. In terms of tissue distribution, expressed by the venom gland.

It is found in the secreted. Its activity is regulated as follows. Inhibited by 1,10-phenanthroline. Its function is as follows. Zinc metalloprotease. Provoques deadhesion of endothelial cells from cell cultures, and also degradation of fibronectin, fibrinogen and gelatin in vitro. Its role in the venom is not fully understood but it might act as a spreading factor that facilitates diffusion of other venom toxins. Alternatively, it might be involved in the proteolytic processing of other venom toxins or it might play a role in extra-oral digestion of prey. The polypeptide is Astacin-like metalloprotease toxin 5 (Loxosceles gaucho (Spider)).